We begin with the raw amino-acid sequence, 242 residues long: Aquaporin (242 aa).

Over 1-11 the chain is Cytoplasmic; that stretch reads MNTSTKLICQK. The chain crosses the membrane as a helical span at residues 12-32; that stretch reads LFAEMLCSCIFGFAVYSAILN. Topologically, residues 33-39 are extracellular; that stretch reads TKASNSS. Residues 40-60 form a helical membrane-spanning segment; it reads ISSTTVGLTVCFSSISLIYTF. The Cytoplasmic portion of the chain corresponds to 61–83; the sequence is CDHSVAHFNPAITIAAICTGKLD. The NPA signature appears at 69 to 71; sequence NPA. Residues 84-104 traverse the membrane as a helical segment; sequence ILLGIGYVIAQLIGFILATLL. Topologically, residues 105–133 are extracellular; sequence TVVCFPYGYLKTMEFIASARISDDISTVN. A helical transmembrane segment spans residues 134–154; the sequence is LFFTEFILSFILVFIAFEVGI. Residues 155–175 are Cytoplasmic-facing; the sequence is NAIREPGVTLFVGIKQIDRSK. A helical membrane pass occupies residues 176-196; the sequence is FAPLTIGITLGFLAFLASTTS. The Extracellular portion of the chain corresponds to 197 to 217; that stretch reads GGAFNPGIVWGPAIMGGNFDD. An NPG motif is present at residues 201-203; that stretch reads NPG. A helical membrane pass occupies residues 218-238; sequence FVIYIISELSGGLLGAFIQVF. Over 239 to 242 the chain is Cytoplasmic; sequence LLFK.

The protein belongs to the MIP/aquaporin (TC 1.A.8) family.

The protein resides in the cell membrane. Functionally, water channel required to facilitate the transport of water across membranes. Involved in osmotolerance. The protein is Aquaporin (AQP) of Enterocytozoon bieneusi (strain H348) (Microsporidian parasite).